Consider the following 331-residue polypeptide: Nucleotide sugar transporter SLC35B4 (331 aa).

The next 11 helical transmembrane spans lie at 4 to 24, 30 to 50, 59 to 79, 92 to 112, 124 to 144, 153 to 173, 201 to 221, 229 to 249, 251 to 267, 268 to 288, and 294 to 314; these read AFAVGLVFAGCCSNVIFLELL, GCGNIVTFAQFLFIAVEGFLF, PAIPIRYYAIMVTMFFTVSVV, LHMIFRSGSLIANMILGIIIL, IALVSAGIFICTFMSAKQVTV, GFQAFAWWLLGIAALTFALLM, ALPLPGFIFLASDIYDHVVLF, VPVIGVTMPVMWFYLLMNVVT, YVCIRGVFILTTECTSL, TVTLVVTLRKFVSLIFSILYF, and MWHWLGTSFVFIGTLMYTEVW. The Mediates endoplasmic reticulum retention motif lies at 326–331; the sequence is KDDKKD.

The protein belongs to the nucleotide-sugar transporter family. SLC35B subfamily.

The protein localises to the endoplasmic reticulum membrane. It carries out the reaction UDP-N-acetyl-alpha-D-glucosamine(in) + UDP-alpha-D-glucuronate(out) = UDP-N-acetyl-alpha-D-glucosamine(out) + UDP-alpha-D-glucuronate(in). It catalyses the reaction UDP-alpha-D-xylose(in) + UDP-alpha-D-glucuronate(out) = UDP-alpha-D-xylose(out) + UDP-alpha-D-glucuronate(in). Functionally, antiporter that transports nucleotide sugars across the endoplasmic reticulum (ER) membrane in exchange for another nucleotide sugar. May couple UDP-alpha-D-glucuronate (UDP-GlcA) or UDP-alpha-D-xylose (UDP-Xyl) efflux to UDP-alpha-D-glucuronate (UDP-GlcA) influx into the ER lumen, which in turn stimulates glucuronidation and excretion of endobiotics and xenobiotics. The polypeptide is Nucleotide sugar transporter SLC35B4 (Slc35b4) (Mus musculus (Mouse)).